We begin with the raw amino-acid sequence, 131 residues long: Binder of sperm protein homolog 2 (131 aa).

A signal peptide spans 1-22 (MEVMSHLVHWVFLAVYMYELNA). Fibronectin type-II domains follow at residues 35-79 (ISTD…YCTA) and 80-128 (QDPP…QCSP). Intrachain disulfides connect cysteine 40-cysteine 64, cysteine 54-cysteine 77, cysteine 85-cysteine 111, and cysteine 99-cysteine 126.

This sequence belongs to the seminal plasma protein family. Epididymis.

It localises to the secreted. In terms of biological role, binds sperm in vitro but has no effect on sperm capacitation. Also binds gelatin and heparin, but not chondroitin sulfate B or phospholipid liposomes. The polypeptide is Binder of sperm protein homolog 2 (Mus musculus (Mouse)).